The following is an 842-amino-acid chain: DNA mismatch repair protein MutS (842 aa).

ATP is bound at residue 596–603 (GPNMSGKS).

This sequence belongs to the DNA mismatch repair MutS family.

Its function is as follows. This protein is involved in the repair of mismatches in DNA. It is possible that it carries out the mismatch recognition step. This protein has a weak ATPase activity. This chain is DNA mismatch repair protein MutS, found in Exiguobacterium sp. (strain ATCC BAA-1283 / AT1b).